The chain runs to 289 residues: ATP synthase gamma chain (289 aa).

It belongs to the ATPase gamma chain family. In terms of assembly, F-type ATPases have 2 components, CF(1) - the catalytic core - and CF(0) - the membrane proton channel. CF(1) has five subunits: alpha(3), beta(3), gamma(1), delta(1), epsilon(1). CF(0) has three main subunits: a, b and c.

Its subcellular location is the cell inner membrane. Functionally, produces ATP from ADP in the presence of a proton gradient across the membrane. The gamma chain is believed to be important in regulating ATPase activity and the flow of protons through the CF(0) complex. This is ATP synthase gamma chain from Coxiella burnetii (strain CbuG_Q212) (Coxiella burnetii (strain Q212)).